A 197-amino-acid chain; its full sequence is MEYSSKLRFAVSCSSNMNRSMEAHGILKKRGFNIESYGSGNQVKMPGPTVDKPNCYEFGPTTYEDIYADLTNKDLHLYTQNGLLHMVDRNRRIKSRPQRFQAETREFDIVLCLEERVFDQVVDFLNRSVGKSGNPVHVINIDIEDNAEEATFGAFFVADLCEKLERSEDFEEDIDQIITDLEENNPKRNLLHTICFY.

At S39 the chain carries Phosphoserine.

The protein belongs to the SSU72 phosphatase family. May interact with synd-1 (via C-terminus); the interaction may prevent ssup-72 binding to RNA polymerase II ama-1. May interact with RNA polymerase II ama-1. In terms of processing, may be phosphorylated by kin-20. Expressed in epidermis, intestine and nervous system.

It localises to the nucleus. It carries out the reaction O-phospho-L-seryl-[protein] + H2O = L-seryl-[protein] + phosphate. The enzyme catalyses O-phospho-L-threonyl-[protein] + H2O = L-threonyl-[protein] + phosphate. Its function is as follows. Protein phosphatase that dephosphorylates 'Ser-5' of the heptad repeats YSPTSPS in the C-terminal domain of the large RNA polymerase II subunit ama-1. By regulating the phosphorylation status of ama-1 and thus ama-1 binding to specific polyadenylation sites, regulates alternative polyadenylation of pre-mRNAs, including unc-44 and dlk-1 mRNAs. This results in the tissue-specific expression of unc-44 isoforms. This Caenorhabditis elegans protein is RNA polymerase II subunit A C-terminal domain phosphatase ssup-72.